Consider the following 513-residue polypeptide: MQLNSTEISDLIKQRIESFDVVSEARNEGTIVSVSDGIIRIHGLADVMQGEMIELPGGRYALALNLERDSVGAVVMGPYANLKEGMKVTGTGRILEVPVGPELLGRVVNTLGEPIDGKGPIEAKLTSPVEVIAPGVIARKSVDQPVQTGYKSVDSMIPIGRGQRELVIGDRQTGKTAMAIDAIINQKDSGIFSIYVAIGQKASTIANVVRKLEEHGALANTIVVVASASESAALQYLAPYAGCAMGEYFRDRGEDALIVYDDLSKQAVAYRQISLLLKRPPGREAFPGDVFYLHSRLLERAARVNEEYVERFTNGEVKGKTGSLTALPIIETQAGDVSAFVPTNVISITDGQIFLQTELFNAGVRPAVDPGISVSRVGGSAQTKIIKKLSGGIRTALAQYRELAAFAQFSSDLDEATKKQLDHGQKVTELMKQKQYAPMSVFDQALVIFAAERGYLADVELNKLLDFEAALLSYARGQYAEFAAEIDKTGAYNDEVEAQLKKLTDDFVATQTW.

169–176 contacts ATP; that stretch reads GDRQTGKT.

The protein belongs to the ATPase alpha/beta chains family. In terms of assembly, F-type ATPases have 2 components, CF(1) - the catalytic core - and CF(0) - the membrane proton channel. CF(1) has five subunits: alpha(3), beta(3), gamma(1), delta(1), epsilon(1). CF(0) has three main subunits: a(1), b(2) and c(9-12). The alpha and beta chains form an alternating ring which encloses part of the gamma chain. CF(1) is attached to CF(0) by a central stalk formed by the gamma and epsilon chains, while a peripheral stalk is formed by the delta and b chains.

The protein resides in the cell inner membrane. The enzyme catalyses ATP + H2O + 4 H(+)(in) = ADP + phosphate + 5 H(+)(out). Functionally, produces ATP from ADP in the presence of a proton gradient across the membrane. The alpha chain is a regulatory subunit. This is ATP synthase subunit alpha 1 from Vibrio campbellii (strain ATCC BAA-1116).